The sequence spans 400 residues: Cytohesin-2 (400 aa).

Positions 10–63 (DLTPEERMELENIRRRKQELLVEIQRLREELSEAMSEVEGLEANEGSKTLQRNR) form a coiled coil. Residues 72 to 201 (FNMDPKKGIQ…VIMLNTSLHN (130 aa)) form the SEC7 domain. The PH domain maps to 259 to 376 (NPDREGWLLK…WIKSIQAAVS (118 aa)). A 1,2-diacyl-sn-glycero-3-phospho-(1D-myo-inositol-3,4,5-trisphosphate)-binding positions include 268-276 (KLGGGRVKT), Arg280, Tyr291, Arg301, Lys339, Asn350, and His351. Residues 387–395 (RKKRISVKK) are C-terminal autoinhibitory region.

Heteromer. Composed of TAMALIN, CYTH2 and at least one GRM1. Interacts with ARRB1. Interacts with ARL4D; the interaction is direct. Directly interacts with CCDC120 through the coiled coil domain; this interaction stabilizes CCDC120, possibly by preventing its ubiquitination, and is required for neurite growth in neuroblastoma cells. Interacts with ARF1. Interacts with FRMD4A. Interacts (via N-terminal domain) with INAVA (via N-terminal domain). In terms of tissue distribution, widely expressed.

It localises to the cell membrane. The protein localises to the cytoplasm. Its subcellular location is the cell projection. The protein resides in the growth cone. It is found in the cell junction. It localises to the tight junction. The protein localises to the adherens junction. Acts as a guanine-nucleotide exchange factor (GEF). Promotes guanine-nucleotide exchange on ARF1, ARF3 and ARF6. Activates ARF factors through replacement of GDP with GTP. The cell membrane form, in association with ARL4 proteins, recruits ARF6 to the plasma membrane. Involved in neurite growth. This Homo sapiens (Human) protein is Cytohesin-2.